Here is a 38-residue protein sequence, read N- to C-terminus: Photosystem II reaction center protein L (38 aa).

Residues 17 to 37 traverse the membrane as a helical segment; sequence SLYWGLLLIFVLAVPFSNYFF.

Belongs to the PsbL family. PSII is composed of 1 copy each of membrane proteins PsbA, PsbB, PsbC, PsbD, PsbE, PsbF, PsbH, PsbI, PsbJ, PsbK, PsbL, PsbM, PsbT, PsbX, PsbY, PsbZ, Psb30/Ycf12, at least 3 peripheral proteins of the oxygen-evolving complex and a large number of cofactors. It forms dimeric complexes.

Its subcellular location is the plastid. It localises to the chloroplast thylakoid membrane. Its function is as follows. One of the components of the core complex of photosystem II (PSII). PSII is a light-driven water:plastoquinone oxidoreductase that uses light energy to abstract electrons from H(2)O, generating O(2) and a proton gradient subsequently used for ATP formation. It consists of a core antenna complex that captures photons, and an electron transfer chain that converts photonic excitation into a charge separation. This subunit is found at the monomer-monomer interface and is required for correct PSII assembly and/or dimerization. In Cedrus deodara (Deodar cedar), this protein is Photosystem II reaction center protein L.